Reading from the N-terminus, the 148-residue chain is Cytochrome c-type biogenesis protein CcmE (148 aa).

Residues 1 to 7 (MKPRHKK) are Cytoplasmic-facing. A helical; Signal-anchor for type II membrane protein membrane pass occupies residues 8–28 (LAIIASSVTALGVASVLVLNA). The Periplasmic portion of the chain corresponds to 29 to 148 (FQSNLVFFFS…ADKARKTVMQ (120 aa)). Positions 123 and 127 each coordinate heme.

Belongs to the CcmE/CycJ family.

The protein localises to the cell inner membrane. Heme chaperone required for the biogenesis of c-type cytochromes. Transiently binds heme delivered by CcmC and transfers the heme to apo-cytochromes in a process facilitated by CcmF and CcmH. In Nitrosospira multiformis (strain ATCC 25196 / NCIMB 11849 / C 71), this protein is Cytochrome c-type biogenesis protein CcmE.